We begin with the raw amino-acid sequence, 280 residues long: Succinate dehydrogenase [ubiquinone] iron-sulfur subunit, mitochondrial (280 aa).

A mitochondrion-targeting transit peptide spans methionine 1 to phenylalanine 25. The 2Fe-2S ferredoxin-type domain maps to lysine 39–leucine 129. 4 residues coordinate [2Fe-2S] cluster: cysteine 92, cysteine 97, cysteine 100, and cysteine 112. The 4Fe-4S ferredoxin-type domain occupies aspartate 175–tyrosine 205. Residues cysteine 185, cysteine 188, and cysteine 191 each contribute to the [4Fe-4S] cluster site. Cysteine 195 contributes to the [3Fe-4S] cluster binding site. Tryptophan 200 lines the a ubiquinone pocket. Residues cysteine 242 and cysteine 248 each coordinate [3Fe-4S] cluster. Residue cysteine 252 participates in [4Fe-4S] cluster binding.

It belongs to the succinate dehydrogenase/fumarate reductase iron-sulfur protein family. Component of complex II composed of four subunits: the flavoprotein (FP) sdha, iron-sulfur protein (IP) sdhb, and a cytochrome b composed of sdhc and sdhd. [2Fe-2S] cluster serves as cofactor. It depends on [3Fe-4S] cluster as a cofactor. Requires [4Fe-4S] cluster as cofactor.

The protein localises to the mitochondrion inner membrane. It carries out the reaction a quinone + succinate = fumarate + a quinol. It catalyses the reaction (R)-malate + a quinone = enol-oxaloacetate + a quinol. The catalysed reaction is (S)-malate + a quinone = enol-oxaloacetate + a quinol. The protein operates within carbohydrate metabolism; tricarboxylic acid cycle; fumarate from succinate (eukaryal route): step 1/1. With respect to regulation, enol-oxaloacetate inhibits the succinate dehydrogenase activity. Iron-sulfur protein (IP) subunit of the succinate dehydrogenase complex (mitochondrial respiratory chain complex II), responsible for transferring electrons from succinate to ubiquinone (coenzyme Q). SDH also oxidizes malate to the non-canonical enol form of oxaloacetate, enol-oxaloacetate. Enol-oxaloacetate, which is a potent inhibitor of the succinate dehydrogenase activity, is further isomerized into keto-oxaloacetate. In Danio rerio (Zebrafish), this protein is Succinate dehydrogenase [ubiquinone] iron-sulfur subunit, mitochondrial (sdhb).